The chain runs to 268 residues: Undecaprenyl-diphosphatase (268 aa).

7 consecutive transmembrane segments (helical) span residues 5–25, 43–63, 84–104, 107–127, 184–204, 213–233, and 248–268; these read SIIS…IPVS, GNTF…LVYF, FSVL…HGFI, VLFE…IILY, AAEF…ALDL, FDDV…GIFV, and PFAI…WLLG.

This sequence belongs to the UppP family.

It localises to the cell inner membrane. It carries out the reaction di-trans,octa-cis-undecaprenyl diphosphate + H2O = di-trans,octa-cis-undecaprenyl phosphate + phosphate + H(+). Catalyzes the dephosphorylation of undecaprenyl diphosphate (UPP). Confers resistance to bacitracin. The sequence is that of Undecaprenyl-diphosphatase from Rhizobium meliloti (strain 1021) (Ensifer meliloti).